A 102-amino-acid polypeptide reads, in one-letter code: Cell division topological specificity factor (102 aa).

Belongs to the MinE family.

Prevents the cell division inhibition by proteins MinC and MinD at internal division sites while permitting inhibition at polar sites. This ensures cell division at the proper site by restricting the formation of a division septum at the midpoint of the long axis of the cell. This is Cell division topological specificity factor from Synechococcus sp. (strain CC9605).